Consider the following 393-residue polypeptide: Staphopain B (393 aa).

An N-terminal signal peptide occupies residues 1–36 (MNSSCKSRVFNIISIIMVSMLILSLGAFANNNKAKA). A propeptide spanning residues 37 to 219 (DSHSKQLEIN…KVEENEAIQE (183 aa)) is cleaved from the precursor. Active-site residues include cysteine 243, histidine 340, and asparagine 360.

Belongs to the peptidase C47 family. In terms of assembly, in the cytoplasm, prematurely activated/folded SspB forms a stable non-covalent complex with SspC. Post-translationally, proteolytically cleaved by staphylococcal serine protease (SspA).

The protein resides in the secreted. Prematurely activated/folded staphopain B is inhibited by staphostatin B (SspC), which is probably required to protect staphylococcal cytoplasmic proteins from degradation by SspB. Also inactivated by E-64 and stimulated by EDTA. Its function is as follows. Cysteine protease that plays an important role in the inhibition of host innate immune response. Degrades host elastin, fibrogen, fibronectin and kininogen. Blocks phagocytosis of opsonised S.aureus by neutrophils and monocytes by inducing their death in a proteolytic activity-dependent manner. Decreases surface expression of the 'don't eat me' signal CD31 on neutrophils. Cleaves host galectin-3/LGALS3, thereby inhibiting the neutrophil-activating ability of the lectin. The chain is Staphopain B (sspB) from Staphylococcus aureus (strain NCTC 8325 / PS 47).